The chain runs to 158 residues: RHSAQSIETQSTSSEELVPSPPSPLPPPRVYKPCFVCQDKSSGYHYGVSACEGCKGFFRRSIQKNMIYTCHRDKNCVINKVTRNRCQYCRLQRCFEVGMSKESVRNDRNKKKKEPIKQECIESLEMTAELDDLTEKIRKAHQETFPSLCQLGKYTTNS.

Low complexity predominate over residues 1-18 (RHSAQSIETQSTSSEELV). Positions 1-24 (RHSAQSIETQSTSSEELVPSPPSP) are disordered. A DNA-binding region (nuclear receptor) is located at residues 31–106 (YKPCFVCQDK…VGMSKESVRN (76 aa)). NR C4-type zinc fingers lie at residues 34-54 (CFVCQDKSSGYHYGVSACEGC) and 70-94 (CHRDKNCVINKVTRNRCQYCRLQRC). An NR LBD domain is found at 129–158 (ELDDLTEKIRKAHQETFPSLCQLGKYTTNS).

Belongs to the nuclear hormone receptor family. NR1 subfamily. In terms of assembly, heterodimer; with a RXR molecule. Binds DNA preferentially as a RAR/RXR heterodimer.

It is found in the nucleus. Functionally, receptor for retinoic acid. Retinoic acid receptors bind as heterodimers to their target response elements in response to their ligands, all-trans or 9-cis retinoic acid, and regulate gene expression in various biological processes. The RAR/RXR heterodimers bind to the retinoic acid response elements (RARE) composed of tandem 5'-AGGTCA-3' sites known as DR1-DR5. The polypeptide is Retinoic acid receptor beta (RARB) (Notophthalmus viridescens (Eastern newt)).